Consider the following 102-residue polypeptide: Co-chaperonin GroES (102 aa).

Belongs to the GroES chaperonin family. In terms of assembly, heptamer of 7 subunits arranged in a ring. Interacts with the chaperonin GroEL.

Its subcellular location is the cytoplasm. Together with the chaperonin GroEL, plays an essential role in assisting protein folding. The GroEL-GroES system forms a nano-cage that allows encapsulation of the non-native substrate proteins and provides a physical environment optimized to promote and accelerate protein folding. GroES binds to the apical surface of the GroEL ring, thereby capping the opening of the GroEL channel. The chain is Co-chaperonin GroES from Chlamydia felis (strain Fe/C-56) (Chlamydophila felis).